The sequence spans 720 residues: Glutaryl-7-aminocephalosporanic-acid acylase (720 aa).

Residues 1–29 form the signal peptide; it reads MLRVLHRAASALVMATVIGLAPAVAFALA. Positions 190-198 are cleaved as a propeptide — spacer peptide; it reads DPPDLADQG. The active-site Nucleophile is S199. Catalysis depends on residues H221 and E653.

It belongs to the peptidase S45 family. Heterotetramer of two alpha and two beta subunits processed from the same precursor.

The protein localises to the periplasm. The enzyme catalyses (7R)-7-(4-carboxybutanamido)cephalosporanate + H2O = (7R)-7-aminocephalosporanate + glutarate. Catalyzes the deacylation of 7 beta-(4-carboxybutanamido)cephalosporanic acid (glutaryl-7-aminocephalosporanic acid or GL-7-ACA) to 7-aminocephalosporanic acid (7-ACA). In Pseudomonas sp. (strain SY-77), this protein is Glutaryl-7-aminocephalosporanic-acid acylase.